Consider the following 156-residue polypeptide: SsrA-binding protein (156 aa).

The protein belongs to the SmpB family.

It localises to the cytoplasm. Its function is as follows. Required for rescue of stalled ribosomes mediated by trans-translation. Binds to transfer-messenger RNA (tmRNA), required for stable association of tmRNA with ribosomes. tmRNA and SmpB together mimic tRNA shape, replacing the anticodon stem-loop with SmpB. tmRNA is encoded by the ssrA gene; the 2 termini fold to resemble tRNA(Ala) and it encodes a 'tag peptide', a short internal open reading frame. During trans-translation Ala-aminoacylated tmRNA acts like a tRNA, entering the A-site of stalled ribosomes, displacing the stalled mRNA. The ribosome then switches to translate the ORF on the tmRNA; the nascent peptide is terminated with the 'tag peptide' encoded by the tmRNA and targeted for degradation. The ribosome is freed to recommence translation, which seems to be the essential function of trans-translation. This chain is SsrA-binding protein, found in Lactiplantibacillus plantarum (strain ATCC BAA-793 / NCIMB 8826 / WCFS1) (Lactobacillus plantarum).